The following is a 63-amino-acid chain: Large ribosomal subunit protein uL29 (63 aa).

Belongs to the universal ribosomal protein uL29 family.

This chain is Large ribosomal subunit protein uL29, found in Actinobacillus pleuropneumoniae serotype 5b (strain L20).